Reading from the N-terminus, the 216-residue chain is Large ribosomal subunit protein uL3 (216 aa).

The tract at residues Leu135–Thr156 is disordered.

Belongs to the universal ribosomal protein uL3 family. Part of the 50S ribosomal subunit. Forms a cluster with proteins L14 and L19.

One of the primary rRNA binding proteins, it binds directly near the 3'-end of the 23S rRNA, where it nucleates assembly of the 50S subunit. The chain is Large ribosomal subunit protein uL3 from Thermobifida fusca (strain YX).